A 325-amino-acid polypeptide reads, in one-letter code: Acetyl-coenzyme A carboxylase carboxyl transferase subunit alpha (325 aa).

In terms of domain architecture, CoA carboxyltransferase C-terminal spans 35-292; sequence EIEKLEARLA…DRVLRRSLKQ (258 aa).

This sequence belongs to the AccA family. In terms of assembly, acetyl-CoA carboxylase is a heterohexamer composed of biotin carboxyl carrier protein (AccB), biotin carboxylase (AccC) and two subunits each of ACCase subunit alpha (AccA) and ACCase subunit beta (AccD).

The protein localises to the cytoplasm. It carries out the reaction N(6)-carboxybiotinyl-L-lysyl-[protein] + acetyl-CoA = N(6)-biotinyl-L-lysyl-[protein] + malonyl-CoA. It functions in the pathway lipid metabolism; malonyl-CoA biosynthesis; malonyl-CoA from acetyl-CoA: step 1/1. Functionally, component of the acetyl coenzyme A carboxylase (ACC) complex. First, biotin carboxylase catalyzes the carboxylation of biotin on its carrier protein (BCCP) and then the CO(2) group is transferred by the carboxyltransferase to acetyl-CoA to form malonyl-CoA. This is Acetyl-coenzyme A carboxylase carboxyl transferase subunit alpha from Geobacillus kaustophilus (strain HTA426).